Here is a 30-residue protein sequence, read N- to C-terminus: 2-enoate reductase (30 aa).

As to quaternary structure, dodecamer; tetramer of trimers. Requires iron-sulfur cluster as cofactor. It depends on FAD as a cofactor. The cofactor is FMN.

It carries out the reaction butanoate + NAD(+) = (2E)-2-butenoate + NADH + H(+). In terms of biological role, involved in fermentation of amino acids (Stickland reaction) such as leucine, isoleucine, valine and phenylalanine. In Clostridium tyrobutyricum, this protein is 2-enoate reductase.